The primary structure comprises 1035 residues: GRB10-interacting GYF protein 1 (1035 aa).

4 positions are modified to phosphoserine: Ser24, Ser28, Ser137, and Ser157. The interval 105–422 is disordered; sequence KGAGPPLAGT…AGPPGDLEDD (318 aa). Basic and acidic residues-rich tracts occupy residues 148–179 and 186–203; these read SPRE…RCGF and PRKE…SLRE. At Ser230 the chain carries Phosphoserine. The span at 239 to 267 shows a compositional bias: basic and acidic residues; sequence GWREHGERRRKFEFDLRGDRGGCGEEEGR. 2 stretches are compositionally biased toward acidic residues: residues 295–304 and 324–349; these read CLDDEDEEMG and PEEQ…EEGP. Ser341 carries the phosphoserine modification. Residues 367–378 show a composition bias toward low complexity; it reads SSPSPLPTLGPL. Residues 388 to 401 are compositionally biased toward basic and acidic residues; that stretch reads TAEKEPPAAEDDIR. The residue at position 406 (Ser406) is a Phosphoserine. Residues 406 to 417 show a composition bias toward low complexity; it reads SPGVGSSAGPPG. One can recognise a GYF domain in the interval 474 to 522; the sequence is ARKWFYKDPQGEIQGPFTTQEMAEWFQAGYFSMSLLVKRGCDEGFQPLG. Residues Ser538 and Ser638 each carry the phosphoserine modification. 3 disordered regions span residues 621–640, 696–724, and 825–879; these read PPRG…LSVP, KREE…QEEE, and WGGP…RPIR. Positions 629–639 are enriched in polar residues; the sequence is LLPTMSRSLSV. Basic and acidic residues predominate over residues 696–722; that stretch reads KREEEERKRREEKRRQQQQEEQKRRQE. Over residues 857–874 the composition is skewed to low complexity; that stretch reads LKNSRSSPSLSDSYSHLS. Phosphoserine is present on Ser862.

The protein belongs to the GIGYF family. As to quaternary structure, interacts with GRB10. This transient binding is increased under IGF1 stimulation and leads to recruitment of GIGYF1/GRB10 complex to IGF1 receptor. Interacts with DDX6.

Functionally, may act cooperatively with GRB10 to regulate tyrosine kinase receptor signaling. May increase IGF1 receptor phosphorylation under IGF1 stimulation as well as phosphorylation of IRS1 and SHC1. This Homo sapiens (Human) protein is GRB10-interacting GYF protein 1 (GIGYF1).